Here is a 65-residue protein sequence, read N- to C-terminus: Large ribosomal subunit protein bL35 (65 aa).

The protein belongs to the bacterial ribosomal protein bL35 family.

In Magnetococcus marinus (strain ATCC BAA-1437 / JCM 17883 / MC-1), this protein is Large ribosomal subunit protein bL35.